An 88-amino-acid chain; its full sequence is Large ribosomal subunit protein bL27 (88 aa).

The interval 1–25 (MAHKKAGGSSRNGRDSPGQRRGIKR) is disordered.

This sequence belongs to the bacterial ribosomal protein bL27 family.

The protein is Large ribosomal subunit protein bL27 (rpmA) of Lawsonia intracellularis.